We begin with the raw amino-acid sequence, 100 residues long: Small ribosomal subunit protein uS14 (100 aa).

Zn(2+)-binding residues include Cys-63, Cys-66, Cys-79, and Cys-82.

Belongs to the universal ribosomal protein uS14 family. Part of the 30S ribosomal subunit. Contacts proteins S3 and S10. Zn(2+) is required as a cofactor.

Binds 16S rRNA, required for the assembly of 30S particles and may also be responsible for determining the conformation of the 16S rRNA at the A site. This Legionella pneumophila (strain Paris) protein is Small ribosomal subunit protein uS14 (rpsN).